A 184-amino-acid chain; its full sequence is Glutathione-regulated potassium-efflux system ancillary protein KefG (184 aa).

Belongs to the NAD(P)H dehydrogenase (quinone) family. KefG subfamily. In terms of assembly, interacts with KefB.

It is found in the cell inner membrane. The catalysed reaction is a quinone + NADH + H(+) = a quinol + NAD(+). The enzyme catalyses a quinone + NADPH + H(+) = a quinol + NADP(+). In terms of biological role, regulatory subunit of a potassium efflux system that confers protection against electrophiles. Required for full activity of KefB. The protein is Glutathione-regulated potassium-efflux system ancillary protein KefG of Escherichia coli O8 (strain IAI1).